We begin with the raw amino-acid sequence, 347 residues long: A-type ATP synthase subunit C (347 aa).

It belongs to the V-ATPase V0D/AC39 subunit family. Has multiple subunits with at least A(3), B(3), C, D, E, F, H, I and proteolipid K(x).

Its subcellular location is the cell membrane. Component of the A-type ATP synthase that produces ATP from ADP in the presence of a proton gradient across the membrane. The polypeptide is A-type ATP synthase subunit C (Haloquadratum walsbyi (strain DSM 16790 / HBSQ001)).